The sequence spans 141 residues: Bombinins BLP-7/H-BO (141 aa).

An N-terminal signal peptide occupies residues 1–18 (MNFKYIIAVSFLIASTYA). Positions 19–43 (RSVKNDEQSLSQRDVLDEESLREIR) are excised as a propeptide. Asn70 is subject to Asparagine amide. Positions 74–123 (TAEEHEVMKRLEAVMRDLDSLDHPEEASEKETRGFNQEEIANLFTKKEKR) are excised as a propeptide. Leu140 carries the leucine amide modification.

It belongs to the bombinin family. In terms of tissue distribution, expressed by the skin glands.

Its subcellular location is the secreted. Antimicrobial peptide with activity against Gram-positive and -negative bacteria and fungi. Shows activity against P.acnes (MIC=5 uM), E.coli (MIC=5-6.3 uM), S.aureus (MIC=5-6.3 uM), M.luteus, S.cerevisiae and C.albicans (MIC=10-12.5 uM). Also reduces the production of interleukin (IL)-8 and granulocyte-macrophage colony stimulating factor (CSF2) in normal human epidermal keratinocytes (NHEKs). Shows anticancer activity against three human hepatoma cell lines. In vivo, using the rat ear edema model, suppress P.acnes-induced skin inflammation, significantly reducing the ear thickness. Shows weak hemolytic activity against human erythrocytes. In terms of biological role, shows weak antimicrobial activity (tested on E.coli, S.aureus and C.albicans). Shows high hemolytic activity against human erythrocytes (38% erythrocyte lysis at 80.0 uM, and up to 85% at 159.7 uM). This is Bombinins BLP-7/H-BO from Bombina orientalis (Oriental fire-bellied toad).